The sequence spans 304 residues: Aspartate carbamoyltransferase catalytic subunit (304 aa).

Arginine 54 and threonine 55 together coordinate carbamoyl phosphate. Lysine 83 is a binding site for L-aspartate. Residues arginine 104, histidine 132, and glutamine 135 each coordinate carbamoyl phosphate. L-aspartate is bound by residues arginine 165 and arginine 226. Leucine 265 and proline 266 together coordinate carbamoyl phosphate.

It belongs to the aspartate/ornithine carbamoyltransferase superfamily. ATCase family. As to quaternary structure, heterooligomer of catalytic and regulatory chains.

The enzyme catalyses carbamoyl phosphate + L-aspartate = N-carbamoyl-L-aspartate + phosphate + H(+). It functions in the pathway pyrimidine metabolism; UMP biosynthesis via de novo pathway; (S)-dihydroorotate from bicarbonate: step 2/3. In terms of biological role, catalyzes the condensation of carbamoyl phosphate and aspartate to form carbamoyl aspartate and inorganic phosphate, the committed step in the de novo pyrimidine nucleotide biosynthesis pathway. The protein is Aspartate carbamoyltransferase catalytic subunit of Pyrobaculum neutrophilum (strain DSM 2338 / JCM 9278 / NBRC 100436 / V24Sta) (Thermoproteus neutrophilus).